We begin with the raw amino-acid sequence, 355 residues long: Uroporphyrinogen decarboxylase (355 aa).

Substrate contacts are provided by residues 27–31, Asp-77, Tyr-154, Thr-209, and His-328; that span reads RQAGR.

The protein belongs to the uroporphyrinogen decarboxylase family. Homodimer.

The protein resides in the cytoplasm. It catalyses the reaction uroporphyrinogen III + 4 H(+) = coproporphyrinogen III + 4 CO2. The protein operates within porphyrin-containing compound metabolism; protoporphyrin-IX biosynthesis; coproporphyrinogen-III from 5-aminolevulinate: step 4/4. Functionally, catalyzes the decarboxylation of four acetate groups of uroporphyrinogen-III to yield coproporphyrinogen-III. The sequence is that of Uroporphyrinogen decarboxylase from Photobacterium profundum (strain SS9).